The following is a 302-amino-acid chain: Sulfate adenylyltransferase subunit 2 (302 aa).

This sequence belongs to the PAPS reductase family. CysD subfamily. As to quaternary structure, heterodimer composed of CysD, the smaller subunit, and CysN.

It carries out the reaction sulfate + ATP + H(+) = adenosine 5'-phosphosulfate + diphosphate. The protein operates within sulfur metabolism; hydrogen sulfide biosynthesis; sulfite from sulfate: step 1/3. Its function is as follows. With CysN forms the ATP sulfurylase (ATPS) that catalyzes the adenylation of sulfate producing adenosine 5'-phosphosulfate (APS) and diphosphate, the first enzymatic step in sulfur assimilation pathway. APS synthesis involves the formation of a high-energy phosphoric-sulfuric acid anhydride bond driven by GTP hydrolysis by CysN coupled to ATP hydrolysis by CysD. The protein is Sulfate adenylyltransferase subunit 2 of Salmonella schwarzengrund (strain CVM19633).